A 605-amino-acid chain; its full sequence is Mini-chromosome maintenance complex-binding protein (605 aa).

2 positions are modified to phosphoserine: Ser-147 and Ser-150.

The protein belongs to the MCMBP family. As to quaternary structure, interacts with the MCM complex.

It is found in the nucleus. Its function is as follows. Associated component of the MCM complex that acts as a regulator of DNA replication. Binds to the MCM complex during late S phase and may act by promoting the disassembly of the MCM complex from chromatin. This chain is Mini-chromosome maintenance complex-binding protein, found in Drosophila melanogaster (Fruit fly).